The following is a 208-amino-acid chain: Urease accessory protein UreG 2 (208 aa).

Position 16-23 (16-23 (GPVGSGKT)) interacts with GTP.

Belongs to the SIMIBI class G3E GTPase family. UreG subfamily. Homodimer. UreD, UreF and UreG form a complex that acts as a GTP-hydrolysis-dependent molecular chaperone, activating the urease apoprotein by helping to assemble the nickel containing metallocenter of UreC. The UreE protein probably delivers the nickel.

It localises to the cytoplasm. Facilitates the functional incorporation of the urease nickel metallocenter. This process requires GTP hydrolysis, probably effectuated by UreG. The protein is Urease accessory protein UreG 2 of Methylobacterium radiotolerans (strain ATCC 27329 / DSM 1819 / JCM 2831 / NBRC 15690 / NCIMB 10815 / 0-1).